The chain runs to 733 residues: 1,4-alpha-glucan branching enzyme GlgB (733 aa).

The active-site Nucleophile is the Asp-412. Catalysis depends on Glu-467, which acts as the Proton donor.

The protein belongs to the glycosyl hydrolase 13 family. GlgB subfamily. Monomer.

It carries out the reaction Transfers a segment of a (1-&gt;4)-alpha-D-glucan chain to a primary hydroxy group in a similar glucan chain.. The protein operates within glycan biosynthesis; glycogen biosynthesis. Catalyzes the formation of the alpha-1,6-glucosidic linkages in glycogen by scission of a 1,4-alpha-linked oligosaccharide from growing alpha-1,4-glucan chains and the subsequent attachment of the oligosaccharide to the alpha-1,6 position. The polypeptide is 1,4-alpha-glucan branching enzyme GlgB (Burkholderia vietnamiensis (strain G4 / LMG 22486) (Burkholderia cepacia (strain R1808))).